The following is a 302-amino-acid chain: Geranylgeranyl diphosphate synthase (302 aa).

Positions 53, 56, and 87 each coordinate isopentenyl diphosphate. Residues aspartate 94 and aspartate 100 each contribute to the Mg(2+) site. Arginine 105 provides a ligand contact to (2E,6E)-farnesyl diphosphate. Arginine 106 serves as a coordination point for isopentenyl diphosphate. Lysine 189, threonine 190, and glutamine 227 together coordinate (2E,6E)-farnesyl diphosphate.

Belongs to the FPP/GGPP synthase family. Mg(2+) is required as a cofactor.

The catalysed reaction is isopentenyl diphosphate + (2E,6E)-farnesyl diphosphate = (2E,6E,10E)-geranylgeranyl diphosphate + diphosphate. It functions in the pathway isoprenoid biosynthesis; geranylgeranyl diphosphate biosynthesis; geranylgeranyl diphosphate from farnesyl diphosphate and isopentenyl diphosphate: step 1/1. Functionally, catalyzes the condensation of farnesyl diphosphate (FPP) and isopentenyl diphosphate (IPP) to yield geranylgeranyl diphosphate (GGPP) needed for biosynthesis of carotenoids and diterpenes. The polypeptide is Geranylgeranyl diphosphate synthase (crtE) (Pantoea ananas (Erwinia uredovora)).